A 206-amino-acid chain; its full sequence is A-type ATP synthase subunit E (206 aa).

Belongs to the V-ATPase E subunit family. In terms of assembly, has multiple subunits with at least A(3), B(3), C, D, E, F, H, I and proteolipid K(x).

The protein localises to the cell membrane. Component of the A-type ATP synthase that produces ATP from ADP in the presence of a proton gradient across the membrane. In Methanothermobacter thermautotrophicus (strain ATCC 29096 / DSM 1053 / JCM 10044 / NBRC 100330 / Delta H) (Methanobacterium thermoautotrophicum), this protein is A-type ATP synthase subunit E.